The chain runs to 136 residues: Large ribosomal subunit protein uL16 (136 aa).

Belongs to the universal ribosomal protein uL16 family. In terms of assembly, part of the 50S ribosomal subunit.

Its function is as follows. Binds 23S rRNA and is also seen to make contacts with the A and possibly P site tRNAs. The protein is Large ribosomal subunit protein uL16 of Shewanella denitrificans (strain OS217 / ATCC BAA-1090 / DSM 15013).